The chain runs to 147 residues: Hemoglobin subunit beta (147 aa).

Val2 bears the N-acetylvaline mark. Residues 3–147 (HLTPEEKSAV…VANALAHKYH (145 aa)) enclose the Globin domain. Thr13 is subject to Phosphothreonine. Ser45 bears the Phosphoserine mark. At Lys60 the chain carries N6-acetyllysine. Residue His64 coordinates heme b. Position 83 is an N6-acetyllysine (Lys83). His93 contributes to the heme b binding site. Cys94 carries the S-nitrosocysteine modification. N6-acetyllysine is present on Lys145.

Belongs to the globin family. In terms of assembly, heterotetramer of two alpha chains and two beta chains in adult hemoglobin A (HbA). As to expression, red blood cells.

In terms of biological role, involved in oxygen transport from the lung to the various peripheral tissues. The polypeptide is Hemoglobin subunit beta (HBB) (Pan paniscus (Pygmy chimpanzee)).